A 254-amino-acid chain; its full sequence is Probable protein ABIL5 (254 aa).

The tract at residues M1 to F26 is disordered.

The protein belongs to the ABI family. Binds SCAR.

Its subcellular location is the cytoplasm. The protein localises to the cytoskeleton. In terms of biological role, involved in regulation of actin and microtubule organization. Part of a WAVE complex that activates the Arp2/3 complex. In Oryza sativa subsp. japonica (Rice), this protein is Probable protein ABIL5.